A 287-amino-acid polypeptide reads, in one-letter code: ATP synthase gamma chain (287 aa).

This sequence belongs to the ATPase gamma chain family. As to quaternary structure, F-type ATPases have 2 components, CF(1) - the catalytic core - and CF(0) - the membrane proton channel. CF(1) has five subunits: alpha(3), beta(3), gamma(1), delta(1), epsilon(1). CF(0) has three main subunits: a, b and c.

The protein resides in the cell inner membrane. Its function is as follows. Produces ATP from ADP in the presence of a proton gradient across the membrane. The gamma chain is believed to be important in regulating ATPase activity and the flow of protons through the CF(0) complex. This is ATP synthase gamma chain from Alkalilimnicola ehrlichii (strain ATCC BAA-1101 / DSM 17681 / MLHE-1).